The sequence spans 512 residues: ATP synthase subunit alpha (512 aa).

169–176 (GDRQTGKT) is a binding site for ATP.

It belongs to the ATPase alpha/beta chains family. F-type ATPases have 2 components, CF(1) - the catalytic core - and CF(0) - the membrane proton channel. CF(1) has five subunits: alpha(3), beta(3), gamma(1), delta(1), epsilon(1). CF(0) has three main subunits: a(1), b(2) and c(9-12). The alpha and beta chains form an alternating ring which encloses part of the gamma chain. CF(1) is attached to CF(0) by a central stalk formed by the gamma and epsilon chains, while a peripheral stalk is formed by the delta and b chains.

It is found in the cell membrane. It catalyses the reaction ATP + H2O + 4 H(+)(in) = ADP + phosphate + 5 H(+)(out). Functionally, produces ATP from ADP in the presence of a proton gradient across the membrane. The alpha chain is a regulatory subunit. The sequence is that of ATP synthase subunit alpha from Buchnera aphidicola subsp. Acyrthosiphon pisum (strain 5A).